Consider the following 324-residue polypeptide: DGAT1/2-independent enzyme synthesizing storage lipids (324 aa).

Topologically, residues 1 to 50 (MIDKNQTCGVGQDSVPYMICLIHILEEWFGVEQLEDYLNFANYLLWVFTP) are lumenal. N5 is a glycosylation site (N-linked (GlcNAc...) asparagine). Residues 51 to 71 (LILLILPYFTIFLLYLTIIFL) form a helical membrane-spanning segment. Topologically, residues 72 to 125 (HIYKRKNVLKEAYSHNLWDGARKTVATLWDGHAAVWHGYEVHGMEKIPEDGPAL) are cytoplasmic. The chain crosses the membrane as a helical span at residues 126-146 (IIFYHGAIPIDFYYFMAKIFI). Residue H130 is part of the active site. The Lumenal segment spans residues 147–324 (HKGRTCRVVA…IMSALLERFH (178 aa)).

This sequence belongs to the diacylglycerol acyltransferase family. Highly divergent.

The protein localises to the endoplasmic reticulum membrane. The catalysed reaction is a 1,2-diacylglycerol + a 1,2-diacyl-sn-glycero-3-phosphocholine = a triacylglycerol + a 1-acyl-sn-glycero-3-phosphocholine. It catalyses the reaction a 1-O-alkyl-2-acyl-sn-glycero-3-phosphocholine + a 1,2-diacylglycerol = a 1-O-alkyl-sn-glycero-3-phosphocholine + a triacylglycerol. It carries out the reaction a 2-acylglycerol + an acyl-CoA = a 1,2-diacylglycerol + CoA. The enzyme catalyses an acyl-CoA + a 1,2-diacyl-sn-glycerol = a triacyl-sn-glycerol + CoA. The catalysed reaction is 2-(9Z-octadecenoyl)-glycerol + (9Z)-octadecenoyl-CoA = 1,2-di-(9Z-octadecenoyl)-glycerol + CoA. It catalyses the reaction 1,2-di-(9Z-octadecenoyl)-sn-glycerol + (9Z)-octadecenoyl-CoA = 1,2,3-tri-(9Z-octadecenoyl)-glycerol + CoA. Acyltransferase activity is specifically inhibited by TMX1 at the endoplasmic reticulum, restricting accumulation of triacylglycerol. Its function is as follows. Catalytic subunit of the alternative triglyceride biosynthesis pathway, which mediates formation of triacylglycerol from diacylglycerol and membrane phospholipids. Synthesizes triacylglycerol at the expense of membrane phospholipids, such as phosphatidylcholine (PC) and its ether-linked form (ePC), thereby altering the composition of membranes. The alternative triglyceride biosynthesis pathway is probably required to provide the energy required for rapid growth when fuel sources are limiting. It maintains mitochondrial function during periods of extracellular lipid starvation. Can also use acyl-CoA as donor: acts as a acyl-CoA:monoacylglycerol acyltransferase (MGAT), but also shows acyl-CoA:diacylglycerol acyltransferase (DGAT) activity. The chain is DGAT1/2-independent enzyme synthesizing storage lipids from Homo sapiens (Human).